The primary structure comprises 294 residues: tRNA dimethylallyltransferase (294 aa).

ATP is bound at residue 11–18 (GPTAVGKT). 13–18 (TAVGKT) contributes to the substrate binding site. Residues 36-39 (DSQQ) are interaction with substrate tRNA.

This sequence belongs to the IPP transferase family. In terms of assembly, monomer. The cofactor is Mg(2+).

The enzyme catalyses adenosine(37) in tRNA + dimethylallyl diphosphate = N(6)-dimethylallyladenosine(37) in tRNA + diphosphate. Functionally, catalyzes the transfer of a dimethylallyl group onto the adenine at position 37 in tRNAs that read codons beginning with uridine, leading to the formation of N6-(dimethylallyl)adenosine (i(6)A). The polypeptide is tRNA dimethylallyltransferase (Lactococcus lactis subsp. lactis (strain IL1403) (Streptococcus lactis)).